Consider the following 1212-residue polypeptide: Peregrin (1212 aa).

The C2H2-type zinc-finger motif lies at 21-47 (YECPVETCRKVYKSYSGIEYHLYHYDH). Disordered regions lie at residues 43–87 (YHYD…SPGR) and 118–176 (VVSE…PKLP). Positions 58 to 67 (LRKHKKKGRQ) are enriched in basic residues. An interaction with KAT6A and KAT6B region spans residues 59–221 (RKHKKKGRQS…VEYDMDEEDY (163 aa)). Over residues 74-85 (QSPSPSEVSQSP) the composition is skewed to low complexity. Acidic residues predominate over residues 119–130 (VSEDEEAPEEAP). A Phosphoserine modification is found at serine 120. N6-acetyllysine is present on lysine 147. The span at 148–166 (SGKHKNKEKRKDSNHHHHS) shows a compositional bias: basic residues. At serine 237 the chain carries Phosphoserine. Residues 272–322 (DAVCCICNDGECQNSNVILFCDMCNLAVHQECYGVPYIPEGQWLCRRCLQS) form a PHD-type 1 zinc finger. Residues 326–359 (AVDCALCPNKGGAFKQTDDGRWAHVVCALWIPEV) form a C2HC pre-PHD-type zinc finger. The PHD-type 2 zinc-finger motif lies at 383-447 (LTCYICKQRG…RKTAYCDIHT (65 aa)). Positions 447 to 489 (TPPGSARRLPALSHSEGEEEEDEEEDEGKSWSSEKVKKAKAKS) are disordered. Serine 459 and serine 461 each carry phosphoserine. Positions 463-473 (GEEEEDEEEDE) are enriched in acidic residues. The interaction with MEAF6 and ING5 stretch occupies residues 500–819 (LAEKRAAAPV…IKKEMTALRR (320 aa)). The interval 542-1077 (YWTLKRQSRN…RGAGWLSEDE (536 aa)) is required for RUNX1 and RUNX2 transcriptional activation. Position 579 is an N6-acetyllysine (lysine 579). A Bromo domain is found at 627–731 (MQLTPFLILL…EQGGAVLRQA (105 aa)). Positions 817–1060 (LRRKLAHQRE…VGTGRGVGHS (244 aa)) are disordered. The span at 823–836 (HQRETGRDGPERHG) shows a compositional bias: basic and acidic residues. A Phosphothreonine modification is found at threonine 856. A compositionally biased stretch (low complexity) spans 856–869 (TDSAAEESSSQETS). Serine 858, serine 915, serine 920, and serine 924 each carry phosphoserine. The span at 993 to 1019 (PRSSSDSESSSSSSSSAASDRTSTTPS) shows a compositional bias: low complexity. Serine 1074 carries the post-translational modification Phosphoserine. The PWWP domain occupies 1083-1166 (ALDLVWAKCR…RTKLVPLGVN (84 aa)). Serine 1185 carries the post-translational modification Phosphoserine.

In terms of assembly, component of some HBO1 complex composed of KAT7/HBO1, MEAF6, ING5, and BRPF1. Component of the MOZ/MORF complex composed at least of ING5, KAT6A, KAT6B, MEAF6 and one of BRPF1, BRD1/BRPF2 and BRPF3. Interacts (via PHD-type zinc finger domains) with unmethylated histone H3 at 'Lys-4' (H3K4me0). Interacts with trimethylated 'Lys-36' of histone H3 (H3K36me3). Interacts with ING5; interaction directs BRPF1 to H4K4me3-enriched chromatin at the 5' of active genes. Interacts with KAT7. Post-translationally, acetylated by KAT6A. Expressed at low level in most tissues, with high expression in the testis and specific regions of the brain.

It is found in the nucleus. The protein resides in the chromosome. Its subcellular location is the cytoplasm. In terms of biological role, scaffold subunit of various histone acetyltransferase (HAT) complexes, such as the MOZ/MORF and HBO1 complexes, which have a histone H3 acetyltransferase activity. Plays a key role in HBO1 complex by directing KAT7/HBO1 specificity towards histone H3 'Lys-14' acetylation (H3K14ac). Some HAT complexes preferentially mediate histone H3 'Lys-23' (H3K23ac) acetylation. Positively regulates the transcription of RUNX1 and RUNX2. This chain is Peregrin, found in Mus musculus (Mouse).